The sequence spans 411 residues: Dual-specificity RNA methyltransferase RlmN (411 aa).

The Proton acceptor role is filled by glutamate 125. The Radical SAM core domain maps to 131–380 (EEGRGTLCIS…IRTPRGRDIL (250 aa)). The cysteines at positions 138 and 383 are disulfide-linked. Residues cysteine 145, cysteine 149, and cysteine 152 each contribute to the [4Fe-4S] cluster site. Residues 209-210 (GE), serine 241, 263-265 (SLH), and asparagine 340 contribute to the S-adenosyl-L-methionine site. Residue cysteine 383 is the S-methylcysteine intermediate of the active site.

Belongs to the radical SAM superfamily. RlmN family. [4Fe-4S] cluster serves as cofactor.

Its subcellular location is the cytoplasm. It catalyses the reaction adenosine(2503) in 23S rRNA + 2 reduced [2Fe-2S]-[ferredoxin] + 2 S-adenosyl-L-methionine = 2-methyladenosine(2503) in 23S rRNA + 5'-deoxyadenosine + L-methionine + 2 oxidized [2Fe-2S]-[ferredoxin] + S-adenosyl-L-homocysteine. The enzyme catalyses adenosine(37) in tRNA + 2 reduced [2Fe-2S]-[ferredoxin] + 2 S-adenosyl-L-methionine = 2-methyladenosine(37) in tRNA + 5'-deoxyadenosine + L-methionine + 2 oxidized [2Fe-2S]-[ferredoxin] + S-adenosyl-L-homocysteine. In terms of biological role, specifically methylates position 2 of adenine 2503 in 23S rRNA and position 2 of adenine 37 in tRNAs. m2A2503 modification seems to play a crucial role in the proofreading step occurring at the peptidyl transferase center and thus would serve to optimize ribosomal fidelity. This chain is Dual-specificity RNA methyltransferase RlmN, found in Brucella melitensis biotype 2 (strain ATCC 23457).